The following is a 349-amino-acid chain: tRNA pseudouridine synthase D (349 aa).

A substrate-binding site is contributed by F27. Catalysis depends on D80, which acts as the Nucleophile. Residue N129 coordinates substrate. Residues 155–303 (GVPNYFGAQR…VEAARRAMLL (149 aa)) enclose the TRUD domain. Position 329 (F329) interacts with substrate.

Belongs to the pseudouridine synthase TruD family.

It carries out the reaction uridine(13) in tRNA = pseudouridine(13) in tRNA. In terms of biological role, responsible for synthesis of pseudouridine from uracil-13 in transfer RNAs. The protein is tRNA pseudouridine synthase D of Enterobacter sp. (strain 638).